A 237-amino-acid polypeptide reads, in one-letter code: Immunoglobulin superfamily member 6 (237 aa).

The first 27 residues, 1 to 27 (MGPVSARRSRLRPEISLILFQVGMVGA), serve as a signal peptide directing secretion. The Extracellular segment spans residues 28–152 (CTVYVLQPGY…ERLFSKEVRS (125 aa)). One can recognise an Ig-like C2-type domain in the interval 30–134 (VYVLQPGYLE…ELSPSAKHVG (105 aa)). A disulfide bond links Cys51 and Cys118. The helical transmembrane segment at 153 to 173 (FLIVLLALLSVYITGVCVTFI) threads the bilayer. The Cytoplasmic portion of the chain corresponds to 174 to 237 (VLFKSKSNGP…RKALPNPGRA (64 aa)). Over residues 215–229 (TSHLPEQEGTDENRK) the composition is skewed to basic and acidic residues. Residues 215–237 (TSHLPEQEGTDENRKALPNPGRA) are disordered.

As to expression, ubiquitous with higher expression in immune tissue.

The protein resides in the membrane. The protein is Immunoglobulin superfamily member 6 (Igsf6) of Mus musculus (Mouse).